The chain runs to 278 residues: Nucleotide-binding protein Tlet_0523 (278 aa).

9–16 (GLSGAGKS) provides a ligand contact to ATP. 58 to 61 (DIRS) contributes to the GTP binding site.

Belongs to the RapZ-like family.

Its function is as follows. Displays ATPase and GTPase activities. In Pseudothermotoga lettingae (strain ATCC BAA-301 / DSM 14385 / NBRC 107922 / TMO) (Thermotoga lettingae), this protein is Nucleotide-binding protein Tlet_0523.